Here is a 279-residue protein sequence, read N- to C-terminus: Small ribosomal subunit protein uS2 (279 aa).

Acidic residues-rich tracts occupy residues 1–18 (MTEN…DEAV), 28–42 (TATE…DESN), and 65–81 (ADAE…FDED). Positions 1–81 (MTENDNEVVE…ELEGPTFDED (81 aa)) are disordered.

This sequence belongs to the universal ribosomal protein uS2 family.

This Haloquadratum walsbyi (strain DSM 16790 / HBSQ001) protein is Small ribosomal subunit protein uS2.